Consider the following 292-residue polypeptide: Protease HtpX (292 aa).

2 helical membrane passes run 5 to 25 (VVLFLLTNFAVLILAGIVMSV) and 34 to 54 (SGLLVMAAIFGFGGSFISLLL). Position 140 (His140) interacts with Zn(2+). Glu141 is a catalytic residue. A Zn(2+)-binding site is contributed by His144. The next 2 helical transmembrane spans lie at 155–175 (LLQGVLNTFVIVLARVVGGII) and 193–213 (IIVFVLEMVFGLFATMIAMWF). Residue Glu218 participates in Zn(2+) binding.

This sequence belongs to the peptidase M48B family. Zn(2+) serves as cofactor.

The protein resides in the cell inner membrane. The chain is Protease HtpX from Xanthomonas campestris pv. campestris (strain B100).